We begin with the raw amino-acid sequence, 347 residues long: Probable zinc transporter 8 (347 aa).

Residues 1 to 27 (MATTTQHMNQIFLVLLLISFAISPAIS) form the signal peptide. The Extracellular segment spans residues 28–51 (TVPKECETDSTDSCIDKTKALPLK). A helical membrane pass occupies residues 52 to 72 (IVAIVAILVTSMIGVAAPLFS). The Cytoplasmic portion of the chain corresponds to 73–83 (RYVTFLHPDGK). The chain crosses the membrane as a helical span at residues 84–104 (IFMIIKCFASGIILGTGFMHV). Residues 105–124 (LPDSFEMLSSPCLEDNPWHK) lie on the Extracellular side of the membrane. The helical transmembrane segment at 125–145 (FPFTGFVAMLSGLVTLAIDSI) threads the bilayer. Residues 146–192 (ATSLYTKKAVADDSEERTTPMIIQIDHLPLTTKERSSTCSKQLLRYR) lie on the Cytoplasmic side of the membrane. Residues 193–213 (VIATVLELGIIVHSVVIGLSL) form a helical membrane-spanning segment. At 214–224 (GATNDTCTIKG) the chain is on the extracellular side. Residues 225–245 (LIAALCFHQMFEGMGLGGCIL) form a helical membrane-spanning segment. Residues 246-254 (QAEYTNVKK) lie on the Cytoplasmic side of the membrane. Residues 255-275 (FVMAFFFAVTTPSGIALGIAL) traverse the membrane as a helical segment. Over 276–286 (SSVYKDNSPTA) the chain is Extracellular. The helical transmembrane segment at 287–307 (LITVGLLNACSAGLLIYMALV) threads the bilayer. Topologically, residues 308–326 (DLLAAEFMGSMLQRSVKLQ) are cytoplasmic. A helical transmembrane segment spans residues 327-347 (LNCFGAALLGCGGMSVLAKWA).

Belongs to the ZIP transporter (TC 2.A.5) family.

It is found in the cell membrane. Functionally, probably mediates zinc uptake from the rhizosphere. The chain is Probable zinc transporter 8 (ZIP8) from Arabidopsis thaliana (Mouse-ear cress).